The chain runs to 76 residues: Heat shock factor-binding protein 1 (76 aa).

The protein belongs to the HSBP1 family. In terms of assembly, homohexamer. Associates with heptad repeats of HSF1 trimers and probably also HSF1 monomers, and with HSP70. Association with HSF1 trimers and HSP70 coincides with attenuation of heat shock response and the conversion of HSF1 trimer to monomer.

It is found in the nucleus. Functionally, negative regulator of the heat shock response. Negatively affects HSF1 DNA-binding activity. May have a role in the suppression of the activation of the stress response during the aging process. This Pongo abelii (Sumatran orangutan) protein is Heat shock factor-binding protein 1 (HSBP1).